The following is a 65-amino-acid chain: Cold shock-like protein CspB (65 aa).

The 60-residue stretch at 3-62 (GKVKWFNNEKGFGFIEMEGSEDVFVHFSAIQSDGYKALEEGQEVSFDITEGNRGPQAANV) folds into the CSD domain.

In terms of assembly, homodimer.

It localises to the cytoplasm. This chain is Cold shock-like protein CspB (cspB), found in Bacillus cereus.